A 1004-amino-acid polypeptide reads, in one-letter code: Sal-like protein 2 (1004 aa).

5 disordered regions span residues 1-33, 51-122, 137-177, 220-270, and 285-307; these read MSRR…EDHP, AHQN…EESS, GGGL…SGHL, PASP…EPPK, and PFSV…ALPG. Residues 34-56 form a C2H2-type 1; atypical zinc finger; it reads QVCAKCCAQFSDPTEFLAHQNSC. Residues 71 to 81 are compositionally biased toward low complexity; the sequence is NPSNSSASSAP. Over residues 83-98 the composition is skewed to basic and acidic residues; the sequence is PEGHSRSQVMDTEHSN. Residues 99 to 110 show a composition bias toward low complexity; sequence PPDSGSSGAPDP. Residues 151-171 show a composition bias toward pro residues; that stretch reads PLPPESTPAPPPPPPPPPPPG. At Ser-243 the chain carries Phosphoserine. C2H2-type zinc fingers lie at residues 372-394, 400-422, 629-651, 657-679, and 689-711; these read HKCR…LRSH, YKCN…FHRH, NQCV…YGQH, FKCK…FVGH, and NSCP…VRMH. The disordered stretch occupies residues 712–910; it reads LGGQIPNGGS…PGESSGRKAC (199 aa). Residues 731–742 show a composition bias toward polar residues; the sequence is QENSSEQSTASG. The segment covering 756 to 779 has biased composition (acidic residues); sequence PEEEMSEEEEEDEEEEEDVTDEDS. Phosphoserine is present on residues Ser-794, Ser-799, and Ser-803. Positions 800 to 809 are enriched in acidic residues; the sequence is EEVSGAEEEV. Positions 810 to 819 are enriched in low complexity; that stretch reads ATSVAAPTTV. Residues 820 to 829 show a composition bias toward basic and acidic residues; it reads KEMDSNEKAP. The span at 832–841 shows a compositional bias: pro residues; that stretch reads TLPPPPPPPD. A compositionally biased stretch (basic and acidic residues) spans 896-910; it reads AMKKDPGESSGRKAC. A Glycyl lysine isopeptide (Lys-Gly) (interchain with G-Cter in ubiquitin) cross-link involves residue Lys-908. C2H2-type zinc fingers lie at residues 908–930 and 937–961; these read KACE…QKTH and FTCV…LAHH.

Belongs to the sal C2H2-type zinc-finger protein family. As to expression, expressed throughout embryonic development. In adult predominantly in brain.

Its subcellular location is the nucleus. Probable transcription factor that plays a role in eye development before, during, and after optic fissure closure. The protein is Sal-like protein 2 (Sall2) of Mus musculus (Mouse).